Here is a 164-residue protein sequence, read N- to C-terminus: Biotin carboxyl carrier protein of acetyl-CoA carboxylase (164 aa).

Residues 86-162 (GDFIVSPLVG…QFGSKLFRIV (77 aa)) enclose the Biotinyl-binding domain. K128 is modified (N6-biotinyllysine).

In terms of assembly, homodimer.

Its pathway is lipid metabolism; fatty acid biosynthesis. Its function is as follows. This protein is a component of the acetyl coenzyme A carboxylase complex; first, biotin carboxylase catalyzes the carboxylation of the carrier protein and then the transcarboxylase transfers the carboxyl group to form malonyl-CoA. The protein is Biotin carboxyl carrier protein of acetyl-CoA carboxylase (accB) of Chlamydia trachomatis serovar D (strain ATCC VR-885 / DSM 19411 / UW-3/Cx).